Here is a 396-residue protein sequence, read N- to C-terminus: Elongation factor Tu (396 aa).

Positions 10–206 (KPHVNVGTIG…ALDTYIPTPE (197 aa)) constitute a tr-type G domain. Residues 19–26 (GHVDHGKT) are G1. GTP is bound at residue 19 to 26 (GHVDHGKT). Mg(2+) is bound at residue threonine 26. Positions 60–64 (GITIN) are G2. Positions 81–84 (DCPG) are G3. GTP contacts are provided by residues 81–85 (DCPGH) and 136–139 (NKCD). Positions 136 to 139 (NKCD) are G4. The tract at residues 174-176 (SAK) is G5.

The protein belongs to the TRAFAC class translation factor GTPase superfamily. Classic translation factor GTPase family. EF-Tu/EF-1A subfamily. As to quaternary structure, monomer.

It localises to the cytoplasm. The catalysed reaction is GTP + H2O = GDP + phosphate + H(+). Its function is as follows. GTP hydrolase that promotes the GTP-dependent binding of aminoacyl-tRNA to the A-site of ribosomes during protein biosynthesis. The polypeptide is Elongation factor Tu (Burkholderia vietnamiensis (strain G4 / LMG 22486) (Burkholderia cepacia (strain R1808))).